We begin with the raw amino-acid sequence, 177 residues long: Large ribosomal subunit protein uL6 (177 aa).

Belongs to the universal ribosomal protein uL6 family. As to quaternary structure, part of the 50S ribosomal subunit.

This protein binds to the 23S rRNA, and is important in its secondary structure. It is located near the subunit interface in the base of the L7/L12 stalk, and near the tRNA binding site of the peptidyltransferase center. This is Large ribosomal subunit protein uL6 from Haemophilus ducreyi (strain 35000HP / ATCC 700724).